A 297-amino-acid chain; its full sequence is Glycerol-3-phosphate dehydrogenase [NAD(P)+] (297 aa).

NADPH contacts are provided by W11, R33, and K79. Sn-glycerol 3-phosphate is bound by residues K79, G107, and S109. Residue A111 coordinates NADPH. Sn-glycerol 3-phosphate contacts are provided by K161, D214, S224, R225, and N226. The Proton acceptor role is filled by K161. R225 serves as a coordination point for NADPH. NADPH-binding residues include V249 and E251.

The protein belongs to the NAD-dependent glycerol-3-phosphate dehydrogenase family.

The protein resides in the cytoplasm. It catalyses the reaction sn-glycerol 3-phosphate + NAD(+) = dihydroxyacetone phosphate + NADH + H(+). It carries out the reaction sn-glycerol 3-phosphate + NADP(+) = dihydroxyacetone phosphate + NADPH + H(+). The protein operates within membrane lipid metabolism; glycerophospholipid metabolism. Its function is as follows. Catalyzes the reduction of the glycolytic intermediate dihydroxyacetone phosphate (DHAP) to sn-glycerol 3-phosphate (G3P), the key precursor for phospholipid synthesis. The polypeptide is Glycerol-3-phosphate dehydrogenase [NAD(P)+] (Campylobacter jejuni subsp. jejuni serotype O:2 (strain ATCC 700819 / NCTC 11168)).